Here is a 159-residue protein sequence, read N- to C-terminus: SsrA-binding protein (159 aa).

It belongs to the SmpB family.

The protein localises to the cytoplasm. Required for rescue of stalled ribosomes mediated by trans-translation. Binds to transfer-messenger RNA (tmRNA), required for stable association of tmRNA with ribosomes. tmRNA and SmpB together mimic tRNA shape, replacing the anticodon stem-loop with SmpB. tmRNA is encoded by the ssrA gene; the 2 termini fold to resemble tRNA(Ala) and it encodes a 'tag peptide', a short internal open reading frame. During trans-translation Ala-aminoacylated tmRNA acts like a tRNA, entering the A-site of stalled ribosomes, displacing the stalled mRNA. The ribosome then switches to translate the ORF on the tmRNA; the nascent peptide is terminated with the 'tag peptide' encoded by the tmRNA and targeted for degradation. The ribosome is freed to recommence translation, which seems to be the essential function of trans-translation. In Acidothermus cellulolyticus (strain ATCC 43068 / DSM 8971 / 11B), this protein is SsrA-binding protein.